Consider the following 429-residue polypeptide: Glutamate-1-semialdehyde 2,1-aminomutase (429 aa).

Lys265 is subject to N6-(pyridoxal phosphate)lysine.

The protein belongs to the class-III pyridoxal-phosphate-dependent aminotransferase family. HemL subfamily. In terms of assembly, homodimer. The cofactor is pyridoxal 5'-phosphate.

Its subcellular location is the cytoplasm. It catalyses the reaction (S)-4-amino-5-oxopentanoate = 5-aminolevulinate. It participates in porphyrin-containing compound metabolism; protoporphyrin-IX biosynthesis; 5-aminolevulinate from L-glutamyl-tRNA(Glu): step 2/2. This Legionella pneumophila (strain Lens) protein is Glutamate-1-semialdehyde 2,1-aminomutase.